Reading from the N-terminus, the 193-residue chain is Putative 3-methyladenine DNA glycosylase (193 aa).

The protein belongs to the DNA glycosylase MPG family.

This is Putative 3-methyladenine DNA glycosylase from Francisella tularensis subsp. tularensis (strain FSC 198).